The following is a 148-amino-acid chain: Large ribosomal subunit protein bL9 (148 aa).

The protein belongs to the bacterial ribosomal protein bL9 family.

Functionally, binds to the 23S rRNA. This is Large ribosomal subunit protein bL9 from Hahella chejuensis (strain KCTC 2396).